We begin with the raw amino-acid sequence, 226 residues long: Ribosome maturation factor RimP (226 aa).

The segment at 190 to 226 (VFPDTTRPQPGGKTGQRKKAQPKKPARGGAPHDDTTD) is disordered. The span at 204 to 215 (GQRKKAQPKKPA) shows a compositional bias: basic residues.

This sequence belongs to the RimP family.

It is found in the cytoplasm. In terms of biological role, required for maturation of 30S ribosomal subunits. The chain is Ribosome maturation factor RimP from Nitratidesulfovibrio vulgaris (strain DSM 19637 / Miyazaki F) (Desulfovibrio vulgaris).